Consider the following 580-residue polypeptide: Sensor histidine kinase YvrG (580 aa).

The Cytoplasmic segment spans residues 1-6; the sequence is MRLRWK. A helical membrane pass occupies residues 7 to 27; sequence FLFHFFGQMLIVILLLTVMLV. Topologically, residues 28–261 are extracellular; it reads ASFFYLDARF…KSFLKVVLKA (234 aa). A helical membrane pass occupies residues 262–282; that stretch reads MFLVMAVLFMYIIWMTVWYMF. Residues 283–580 are Cytoplasmic-facing; the sequence is RFGLPIFHTI…TVITILFKKQ (298 aa). Positions 363 to 580 constitute a Histidine kinase domain; the sequence is GLSHDLKTPL…TVITILFKKQ (218 aa). Histidine 366 is subject to Phosphohistidine; by autocatalysis.

The protein localises to the cell membrane. The enzyme catalyses ATP + protein L-histidine = ADP + protein N-phospho-L-histidine.. Its function is as follows. Member of the two-component regulatory system YvrG/YvrH that positively regulates 7 transcriptional units (wprA, wapA-yxxG, dltABCDE, sunA, sunT-bdbA-yolJ-bdbB, sigO-rsoA, and sigX-rsiX), and negatively regulates the lytABC operon. Probably activates YvrH by phosphorylation. In Bacillus subtilis (strain 168), this protein is Sensor histidine kinase YvrG (yvrG).